The chain runs to 653 residues: Laccase ustL (653 aa).

The first 20 residues, 1–20 (MTSLTGLALLLCVLASQSWA), serve as a signal peptide directing secretion. 2 Plastocyanin-like domains span residues 31 to 143 (WEKG…RPKR) and 173 to 362 (VLSD…ATQV). Asn74, Asn220, Asn235, Asn255, Asn277, Asn405, Asn463, and Asn479 each carry an N-linked (GlcNAc...) asparagine glycan. Residues 463–594 (NQTVGTEDEK…GGMSIALLDG (132 aa)) enclose the Plastocyanin-like 3 domain. Residues His501, His504, His506, His576, Cys577, His578, and His582 each coordinate Cu cation. Asn623 carries an N-linked (GlcNAc...) asparagine glycan.

It belongs to the multicopper oxidase family.

The catalysed reaction is 4 norrubrofusarin + O2 = 2 ustilaginoidin A + 2 H2O. It functions in the pathway secondary metabolite biosynthesis. Functionally, laccase; part of the gene cluster that mediates the biosynthesis of ustilaginoidins, dimeric gamma-naphthopyrones isolated from different fungal species. The first step in the biosynthesis of ustilaginoidins is the production of gamma-naphthopyrone precursor YWA1 by the non-reducing polyketide synthase ustP, via condensation of one acetyl-CoA starter unit with 6 malonyl-CoA units. YWA1 is then probably substrate of the ustZ to yield norrubrofusarin via a dehydration reaction. A key enzyme in the biosynthetic pathway is the laccase ustL, which catalyzes the oxidative dimerization of norrubrofusarin to ustilaginoidin A. It can produce the M- and P-atropisomers in varying amounts, depending on the reaction conditions. For the biosynthesis of 3-methylustilaginoid in derivatives such as chaetochromin A, a methylated derivative of YWA1 is required. The C-methylation is considered to be catalyzed by ustM, the phosphopantetheine attachment site of which indicates that it acts on the growing polyketide chain before release of the product. For the biosynthesis of chaetochromin A, it is assumed that saturation of the D2 double bond takes place before dimerization, and is probably catalyzed by an external reductase because no candidate gene was identified within the cluster. In Ustilaginoidea virens (Rice false smut fungus), this protein is Laccase ustL.